The primary structure comprises 316 residues: D-alanine--D-alanine ligase (316 aa).

The ATP-grasp domain occupies 107-303 (KEVFAARGLT…FEDLVERILI (197 aa)). 133–188 (AEGFGYPVVVKPSQEGSSVGVSIVKSPEELPSALELAFRYDDDILVERFIKGREIQ) is an ATP binding site. D256, E269, and N271 together coordinate Mg(2+).

It belongs to the D-alanine--D-alanine ligase family. The cofactor is Mg(2+). It depends on Mn(2+) as a cofactor.

It localises to the cytoplasm. The enzyme catalyses 2 D-alanine + ATP = D-alanyl-D-alanine + ADP + phosphate + H(+). Its pathway is cell wall biogenesis; peptidoglycan biosynthesis. Its function is as follows. Cell wall formation. This Geobacter sulfurreducens (strain ATCC 51573 / DSM 12127 / PCA) protein is D-alanine--D-alanine ligase.